The primary structure comprises 269 residues: Eukaryotic translation initiation factor 3 subunit G-1 (269 aa).

In terms of domain architecture, RRM spans 188 to 266 (AAIRISNLSE…LILSVEWSKP (79 aa)).

It belongs to the eIF-3 subunit G family. Component of the eukaryotic translation initiation factor 3 (eIF-3) complex. The eIF-3 complex interacts with pix.

It localises to the cytoplasm. RNA-binding component of the eukaryotic translation initiation factor 3 (eIF-3) complex, which is involved in protein synthesis of a specialized repertoire of mRNAs and, together with other initiation factors, stimulates binding of mRNA and methionyl-tRNAi to the 40S ribosome. The eIF-3 complex specifically targets and initiates translation of a subset of mRNAs involved in cell proliferation. This subunit can bind 18S rRNA. The protein is Eukaryotic translation initiation factor 3 subunit G-1 of Drosophila willistoni (Fruit fly).